A 305-amino-acid chain; its full sequence is Methionyl-tRNA formyltransferase (305 aa).

110–113 is a (6S)-5,6,7,8-tetrahydrofolate binding site; that stretch reads SLLP.

This sequence belongs to the Fmt family.

It catalyses the reaction L-methionyl-tRNA(fMet) + (6R)-10-formyltetrahydrofolate = N-formyl-L-methionyl-tRNA(fMet) + (6S)-5,6,7,8-tetrahydrofolate + H(+). Functionally, attaches a formyl group to the free amino group of methionyl-tRNA(fMet). The formyl group appears to play a dual role in the initiator identity of N-formylmethionyl-tRNA by promoting its recognition by IF2 and preventing the misappropriation of this tRNA by the elongation apparatus. This chain is Methionyl-tRNA formyltransferase, found in Gluconacetobacter diazotrophicus (strain ATCC 49037 / DSM 5601 / CCUG 37298 / CIP 103539 / LMG 7603 / PAl5).